A 314-amino-acid chain; its full sequence is DNA-directed RNA polymerase subunit alpha (314 aa).

An alpha N-terminal domain (alpha-NTD) region spans residues 1–228 (MIEIEKPRIE…EHLNIFVGLT (228 aa)). Residues 245-314 (KEKVLEMSIE…DLGLGLRKED (70 aa)) form an alpha C-terminal domain (alpha-CTD) region.

The protein belongs to the RNA polymerase alpha chain family. In terms of assembly, homodimer. The RNAP catalytic core consists of 2 alpha, 1 beta, 1 beta' and 1 omega subunit. When a sigma factor is associated with the core the holoenzyme is formed, which can initiate transcription.

It carries out the reaction RNA(n) + a ribonucleoside 5'-triphosphate = RNA(n+1) + diphosphate. In terms of biological role, DNA-dependent RNA polymerase catalyzes the transcription of DNA into RNA using the four ribonucleoside triphosphates as substrates. The chain is DNA-directed RNA polymerase subunit alpha from Staphylococcus haemolyticus (strain JCSC1435).